A 358-amino-acid polypeptide reads, in one-letter code: Methionine aminopeptidase 2 (358 aa).

Position 111 (H111) interacts with substrate. A divalent metal cation contacts are provided by D131, D142, and H211. H219 contacts substrate. A divalent metal cation contacts are provided by E244 and E339.

Belongs to the peptidase M24A family. Methionine aminopeptidase eukaryotic type 2 subfamily. The cofactor is Co(2+). Zn(2+) is required as a cofactor. It depends on Mn(2+) as a cofactor. Fe(2+) serves as cofactor.

The protein localises to the cytoplasm. The enzyme catalyses Release of N-terminal amino acids, preferentially methionine, from peptides and arylamides.. Its function is as follows. Cotranslationally removes the N-terminal methionine from nascent proteins. The N-terminal methionine is often cleaved when the second residue in the primary sequence is small and uncharged (Met-Ala-, Cys, Gly, Pro, Ser, Thr, or Val). The polypeptide is Methionine aminopeptidase 2 (Laccaria bicolor (strain S238N-H82 / ATCC MYA-4686) (Bicoloured deceiver)).